A 25-amino-acid polypeptide reads, in one-letter code: ADPTFGFTPLGLSEKANLQIMKAYD.

As to quaternary structure, heterodimer of a 27 kDa subunit and a 17 kDa subunit; disulfide-linked. SBTX is known to be glycosylated but it is not known which one of its two subunits is modified; contains 5% carbohydrates. As to expression, expressed in seeds, leaves, roots and stem (at protein level).

In terms of biological role, involved in plant defense. Inhibits spore germination in C.sojina, A.niger (at concentrations &gt;50 ug/ml) and P.herguei but not in F.oxysporum and F.solani. Does not inhibit vegetative mycelial growth. Inhibits growth of C.albicans and K.marxiannus but not P.membranifaciens or C.parapsilosis. Probably acts by affecting the cell membrane. Does not have urease, chitinase, beta-1,3-glucanase or hemagglutination activities. Does not inhibit trypsin. Injection into mice produces toxic effects such as dyspnea, tonic-clonic convulsion and death. The protein is Soybean toxin 27 kDa chain of Glycine max (Soybean).